The following is a 158-amino-acid chain: NAD(P)H-quinone oxidoreductase subunit N (158 aa).

Belongs to the complex I NdhN subunit family. In terms of assembly, NDH-1 can be composed of about 15 different subunits; different subcomplexes with different compositions have been identified which probably have different functions.

It is found in the cellular thylakoid membrane. It catalyses the reaction a plastoquinone + NADH + (n+1) H(+)(in) = a plastoquinol + NAD(+) + n H(+)(out). The catalysed reaction is a plastoquinone + NADPH + (n+1) H(+)(in) = a plastoquinol + NADP(+) + n H(+)(out). In terms of biological role, NDH-1 shuttles electrons from an unknown electron donor, via FMN and iron-sulfur (Fe-S) centers, to quinones in the respiratory and/or the photosynthetic chain. The immediate electron acceptor for the enzyme in this species is believed to be plastoquinone. Couples the redox reaction to proton translocation, and thus conserves the redox energy in a proton gradient. Cyanobacterial NDH-1 also plays a role in inorganic carbon-concentration. The chain is NAD(P)H-quinone oxidoreductase subunit N from Crocosphaera subtropica (strain ATCC 51142 / BH68) (Cyanothece sp. (strain ATCC 51142)).